The chain runs to 589 residues: ATP-dependent ubiquitin transferase-like protein Cap2 (589 aa).

Residue cysteine 13 forms a Glycyl cysteine dithioester (Cys-Gly) (interchain with G-Cter in DncV) linkage. A Glycyl lysine isopeptide (Lys-Gly) (interchain with G-Cter in DncV) cross-link involves residue lysine 77. The active-site For E2-like domain is the cysteine 91. Glycyl lysine isopeptide (Lys-Gly) (interchain with G-Cter in DncV) cross-links involve residues lysine 305, lysine 387, and lysine 484. A Glycyl cysteine dithioester (Cys-Gly) (interchain with G-Cter in DncV) cross-link involves residue cysteine 493. Catalysis depends on for E1-like domain residues cysteine 493, cysteine 496, and cysteine 513. Cysteine 513 is covalently cross-linked (Glycyl cysteine dithioester (Cys-Gly) (interchain with G-Cter in DncV)). A Glycyl lysine isopeptide (Lys-Gly) (interchain with G-Cter in DncV) cross-link involves residue lysine 523.

The protein in the C-terminal section; belongs to the HesA/MoeB/ThiF family. A Cap2 dimer is bound on either side by a DncV monomer. In terms of processing, conjugated to DncV via 5 different Lys residues and 3 Cys residues.

In terms of biological role, CD-NTase priming component of a CBASS antiviral system. CBASS (cyclic oligonucleotide-based antiphage signaling system) provides immunity against bacteriophages. The CD-NTase protein (DncV) synthesizes cyclic nucleotides in response to infection; these serve as specific second messenger signals. The signals activate a diverse range of effectors, leading to bacterial cell death and thus abortive phage infection. A type II-A(GA) CBASS system. Conjugates DncV to itself in vitro and to other cellular proteins in vivo; conjugation requires ATP. This primes DncV, upon phage infection CdnA activates and makes cyclic nucleotides. Its function is as follows. Protects E.coli against phage infection. When capV and dncV are introduced in E.coli MG1655 there is 1000-fold protection against phage P1; protection against other phage (T2, T4, T5, T6 and lambda-vir) requires the 2 subsequent genes. In another paper the capV-dncV-cap2-cap3 operon gives 10(4)-10(5)-fold protection against phages lambda, T2, T4 and T6, about 1000-fold protection against P1 and 10-fold protection against T5. The chain is ATP-dependent ubiquitin transferase-like protein Cap2 from Escherichia coli (strain TW11681).